We begin with the raw amino-acid sequence, 227 residues long: Large ribosomal subunit protein uL10c (227 aa).

The transit peptide at 1–47 directs the protein to the chloroplast; it reads MEATFFTLPSSTSHSYPFSLKSHFNNSLTLPTHPHFKPKSKNLTIRS.

The protein belongs to the universal ribosomal protein uL10 family. As to quaternary structure, part of the 50S ribosomal subunit.

Its subcellular location is the plastid. The protein localises to the chloroplast. This protein binds directly to 23S ribosomal RNA. The chain is Large ribosomal subunit protein uL10c (RPL10) from Nicotiana tabacum (Common tobacco).